Reading from the N-terminus, the 138-residue chain is Basic phospholipase A2 myotoxin I (138 aa).

The first 16 residues, 1–16, serve as a signal peptide directing secretion; that stretch reads MRTLWIMAVLLVGVEG. Cystine bridges form between Cys42–Cys131, Cys44–Cys60, Cys59–Cys111, Cys65–Cys138, Cys66–Cys104, Cys73–Cys97, and Cys91–Cys102. Ca(2+)-binding residues include Tyr43, Gly45, and Gly47. Residue His63 is part of the active site. Asp64 lines the Ca(2+) pocket. Asp105 is an active-site residue.

Belongs to the phospholipase A2 family. Group II subfamily. D49 sub-subfamily. As to quaternary structure, monomer. Homodimer; non-covalently linked (alternative/compact dimer conformation). Ca(2+) serves as cofactor. As to expression, expressed by the venom gland.

The protein localises to the secreted. The enzyme catalyses a 1,2-diacyl-sn-glycero-3-phosphocholine + H2O = a 1-acyl-sn-glycero-3-phosphocholine + a fatty acid + H(+). High level of membrane cholesterol content reduces cytolytic activity, whereas low level of membrane cholesterol content increases cytolytic activity. In terms of biological role, snake venom phospholipase A2 (PLA2) that displays local myotoxic activity. It also displays anticoagulant action in plasma and edema-inducing activities. In addition, it shows cytotoxic activity to a variety of cell types and bactericidal activity to a variety of Gram-negative and Gram-positive bacteria. PLA2 catalyzes the calcium-dependent hydrolysis of the 2-acyl groups in 3-sn-phosphoglycerides. The protein is Basic phospholipase A2 myotoxin I of Bothrops asper (Terciopelo).